The following is a 240-amino-acid chain: Serine protease SplB (240 aa).

Positions 1–36 are cleaved as a signal peptide; the sequence is MNKNVVIKSLAALTILTSVTGIGTTLVEEVQQTAKA. Residues His75, Asp113, and Ser193 each act as charge relay system in the active site.

Belongs to the peptidase S1B family.

The protein localises to the secreted. Functionally, serine protease that cleaves specifically after the sequence Trp-Glu-Leu-Gln. The protein is Serine protease SplB (splB) of Staphylococcus aureus (strain USA300).